A 493-amino-acid chain; its full sequence is uncharacterized protein (493 aa).

Positions 316–403 (LNMVNFGPDD…NSVDNSVHDS (88 aa)) are disordered. Residues 338 to 353 (ESQNNSESNSESITES) are compositionally biased toward low complexity. Residues 371-398 (SQDNDTVQIDKSTSSDSVHNYFDNSVDN) are compositionally biased toward polar residues.

The protein belongs to the mimivirus R69 family.

This is an uncharacterized protein from Acanthamoeba polyphaga (Amoeba).